Here is a 227-residue protein sequence, read N- to C-terminus: MIMKTYFSGVSTLGVHSLATEDYGFFPLSVDQKTMERMKNVLDIPATQLNISNSSLIGSLCVGNSNGLLVPDITTEKEVELIKMFLKENSLDVNLERLKAKNTAFGNLILTNNKGCIISEELSRFRKTIEDVLDVESGVGNYAELATVGSNGVATDKGCLVHPLTDELELEWIQNILRVDYVERGTANRGVTSVGACILANSKGAVVGGDTSGPEILKIEEALDLID.

The protein belongs to the eIF-6 family.

Its function is as follows. Binds to the 50S ribosomal subunit and prevents its association with the 30S ribosomal subunit to form the 70S initiation complex. The sequence is that of Translation initiation factor 6 from Methanococcus maripaludis (strain C6 / ATCC BAA-1332).